The primary structure comprises 520 residues: Laccase-4 (520 aa).

The N-terminal stretch at Met1–Gly18 is a signal peptide. 3 Plastocyanin-like domains span residues Ile24–Tyr149, Val161–Tyr303, and Thr370–Asp491. N-linked (GlcNAc...) asparagine glycans are attached at residues Asn73 and Asn76. The Cu cation site is built by His86, His88, His131, and His133. 2 disulfides stabilise this stretch: Cys107-Cys509 and Cys139-Cys227. Asn239 and Asn399 each carry an N-linked (GlcNAc...) asparagine glycan. Cu cation contacts are provided by His418, His421, His423, His473, Cys474, His475, and His479. N-linked (GlcNAc...) asparagine glycosylation occurs at Asn497.

Belongs to the multicopper oxidase family. As to quaternary structure, homodimer. It depends on Cu cation as a cofactor.

The protein localises to the secreted. The enzyme catalyses 4 hydroquinone + O2 = 4 benzosemiquinone + 2 H2O. Lignin degradation and detoxification of lignin-derived products. This Trametes villosa (White-rot fungus) protein is Laccase-4 (LCC4).